Reading from the N-terminus, the 1303-residue chain is DNA-directed RNA polymerase subunit beta' (1303 aa).

Zn(2+) contacts are provided by C60, C62, C75, and C78. Residues D535, D537, and D539 each contribute to the Mg(2+) site. Zn(2+)-binding residues include C876, C953, C960, and C963.

Belongs to the RNA polymerase beta' chain family. In terms of assembly, the RNAP catalytic core consists of 2 alpha, 1 beta, 1 beta' and 1 omega subunit. When a sigma factor is associated with the core the holoenzyme is formed, which can initiate transcription. The cofactor is Mg(2+). Zn(2+) serves as cofactor.

The enzyme catalyses RNA(n) + a ribonucleoside 5'-triphosphate = RNA(n+1) + diphosphate. Its function is as follows. DNA-dependent RNA polymerase catalyzes the transcription of DNA into RNA using the four ribonucleoside triphosphates as substrates. This is DNA-directed RNA polymerase subunit beta' from Saccharopolyspora erythraea (strain ATCC 11635 / DSM 40517 / JCM 4748 / NBRC 13426 / NCIMB 8594 / NRRL 2338).